Consider the following 394-residue polypeptide: Aspergillopepsin-1 (394 aa).

The first 20 residues, 1 to 20 (MVVFSKTAALVLGLSTAVSA), serve as a signal peptide directing secretion. A propeptide spans 21–69 (APAPTRKGFTINQIARPANKTRTVNLPGLYARSLAKFGGTVPQSVKEAA) (activation peptide). The Peptidase A1 domain occupies 85 to 391 (YLTPVTVGKS…NSEGPKLGFA (307 aa)). The active site involves Asp101. 2 O-linked (Man...) serine glycosylation sites follow: Ser129 and Ser304. Cys319 and Cys354 are joined by a disulfide.

It belongs to the peptidase A1 family. In terms of assembly, monomer.

The protein localises to the secreted. It catalyses the reaction Hydrolysis of proteins with broad specificity. Generally favors hydrophobic residues in P1 and P1', but also accepts Lys in P1, which leads to activation of trypsinogen. Does not clot milk.. Secreted aspartic endopeptidase that allows assimilation of proteinaceous substrates. The scissile peptide bond is attacked by a nucleophilic water molecule activated by two aspartic residues in the active site. Shows a broad primary substrate specificity. Favors hydrophobic residues at the P1 and P1' positions, but also accepts a lysine residue in the P1 position, leading to the activation of trypsinogen and chymotrypsinogen A. In Aspergillus phoenicis (Aspergillus saitoi), this protein is Aspergillopepsin-1 (pepA).